Consider the following 325-residue polypeptide: MATANGAKSPSSMGPKVLFYSILLTLQYGAQPLISKRCIRKDVIVTSSVLTCEIVKVICALILMARNGSLKGLAKEWTLMGSLTASGLPAAIYALQNSLLQISYRSLDSLTFSILNQTKIFFTAFFTFIILRQKQSILQIGALCLLIMAAVLLSVGEGSNKDSSGINADQKLFYGIIPVLAASVLSGLASSLCQWASQVKKHSSYLMTVEMSIVGSLCLLVSTLKSPDGEAIKKYGFFHGWTALTLVPVISNALGGILVGLVTSHAGGVRKGFVIVSALLVTALLQFAFEGKPPSSYCLVALPLVMSSISMYQKYPYIDKKKKKV.

The Cytoplasmic portion of the chain corresponds to 1 to 13; it reads MATANGAKSPSSM. Residues 14-34 form a helical membrane-spanning segment; that stretch reads GPKVLFYSILLTLQYGAQPLI. The Lumenal segment spans residues 35-42; it reads SKRCIRKD. A helical transmembrane segment spans residues 43-63; it reads VIVTSSVLTCEIVKVICALIL. Over 64–109 the chain is Cytoplasmic; the sequence is MARNGSLKGLAKEWTLMGSLTASGLPAAIYALQNSLLQISYRSLDS. Residues 110–130 form a helical membrane-spanning segment; the sequence is LTFSILNQTKIFFTAFFTFII. At 131-135 the chain is on the lumenal side; the sequence is LRQKQ. The chain crosses the membrane as a helical span at residues 136 to 156; it reads SILQIGALCLLIMAAVLLSVG. At 157–171 the chain is on the cytoplasmic side; the sequence is EGSNKDSSGINADQK. The chain crosses the membrane as a helical span at residues 172–192; that stretch reads LFYGIIPVLAASVLSGLASSL. Topologically, residues 193–203 are lumenal; sequence CQWASQVKKHS. The helical transmembrane segment at 204-224 threads the bilayer; sequence SYLMTVEMSIVGSLCLLVSTL. Over 225–241 the chain is Cytoplasmic; the sequence is KSPDGEAIKKYGFFHGW. A helical transmembrane segment spans residues 242 to 262; sequence TALTLVPVISNALGGILVGLV. Residues 263-270 are Lumenal-facing; that stretch reads TSHAGGVR. A helical transmembrane segment spans residues 271–291; that stretch reads KGFVIVSALLVTALLQFAFEG. Residues 292–325 lie on the Cytoplasmic side of the membrane; sequence KPPSSYCLVALPLVMSSISMYQKYPYIDKKKKKV.

It belongs to the nucleotide-sugar transporter family. CMP-Sialate:CMP antiporter (TC 2.A.7.12) subfamily. As to expression, expressed in roots, cotyledons, leaves, stems, flowers and siliques.

It is found in the endoplasmic reticulum membrane. Its function is as follows. Mediates the transport of UDP-linked acetylated hexosamines across the endoplasmic reticulum (ER) membrane. Facilitates UDP-N-acetylglucosamine (UDP-GlcNAc) and UDP-N-acetylgalactosamine (UDP-GalNAc) transport. Regulates the cytokinin signal in meristematic cells through modulating activity of cytokinin oxidases/dehydrogenases. Part of the ER quality control system, which determines the fate of aberrant proteins in the secretory pathway. This is UDP-N-acetylglucosamine transporter ROCK1 from Arabidopsis thaliana (Mouse-ear cress).